The sequence spans 272 residues: Shikimate dehydrogenase (NADP(+)) (272 aa).

Residues 14-16 (SKS) and Thr-61 contribute to the shikimate site. Lys-65 acts as the Proton acceptor in catalysis. Shikimate is bound by residues Asn-86 and Asp-102. NADP(+)-binding positions include 126 to 130 (GAGGA), 149 to 154 (NRTFSK), Ser-189, and Met-213. A shikimate-binding site is contributed by Tyr-215. Residue Gly-238 participates in NADP(+) binding.

It belongs to the shikimate dehydrogenase family. As to quaternary structure, homodimer.

The enzyme catalyses shikimate + NADP(+) = 3-dehydroshikimate + NADPH + H(+). Its pathway is metabolic intermediate biosynthesis; chorismate biosynthesis; chorismate from D-erythrose 4-phosphate and phosphoenolpyruvate: step 4/7. In terms of biological role, involved in the biosynthesis of the chorismate, which leads to the biosynthesis of aromatic amino acids. Catalyzes the reversible NADPH linked reduction of 3-dehydroshikimate (DHSA) to yield shikimate (SA). This chain is Shikimate dehydrogenase (NADP(+)), found in Haemophilus influenzae (strain ATCC 51907 / DSM 11121 / KW20 / Rd).